We begin with the raw amino-acid sequence, 74 residues long: Large ribosomal subunit protein bL31 (74 aa).

Cysteine 16, cysteine 18, cysteine 38, and cysteine 41 together coordinate Zn(2+).

The protein belongs to the bacterial ribosomal protein bL31 family. Type A subfamily. As to quaternary structure, part of the 50S ribosomal subunit. It depends on Zn(2+) as a cofactor.

Functionally, binds the 23S rRNA. This is Large ribosomal subunit protein bL31 from Streptomyces griseus subsp. griseus (strain JCM 4626 / CBS 651.72 / NBRC 13350 / KCC S-0626 / ISP 5235).